The chain runs to 339 residues: Senescence-specific cysteine protease SAG39 (339 aa).

Positions 1 to 23 (MAMAKALLFAILGCLCLCSAVLA) are cleaved as a signal peptide. Disulfide bonds link Cys-144-Cys-187, Cys-178-Cys-220, and Cys-276-Cys-328. Residue Cys-147 is part of the active site. Active-site residues include His-282 and Asn-303.

Belongs to the peptidase C1 family. Low expression in mature leaves.

It is found in the vacuole. Its function is as follows. Cysteine protease that may have a developmental senescence specific cell death function during apoptosis, heavy metal detoxification, and hypersensitive response. The protein is Senescence-specific cysteine protease SAG39 of Oryza sativa subsp. japonica (Rice).